Reading from the N-terminus, the 428-residue chain is Glutamate-1-semialdehyde 2,1-aminomutase (428 aa).

Residue Lys265 is modified to N6-(pyridoxal phosphate)lysine.

It belongs to the class-III pyridoxal-phosphate-dependent aminotransferase family. HemL subfamily. Homodimer. Pyridoxal 5'-phosphate serves as cofactor.

Its subcellular location is the cytoplasm. The enzyme catalyses (S)-4-amino-5-oxopentanoate = 5-aminolevulinate. It functions in the pathway porphyrin-containing compound metabolism; protoporphyrin-IX biosynthesis; 5-aminolevulinate from L-glutamyl-tRNA(Glu): step 2/2. In Ruthia magnifica subsp. Calyptogena magnifica, this protein is Glutamate-1-semialdehyde 2,1-aminomutase.